A 445-amino-acid polypeptide reads, in one-letter code: Ribosomal protein uS12 methylthiotransferase RimO (445 aa).

The MTTase N-terminal domain maps to 4 to 119 (IKVALVSLGC…LLESIKVFLK (116 aa)). Residues Cys13, Cys48, Cys82, Cys156, Cys160, and Cys163 each coordinate [4Fe-4S] cluster. The Radical SAM core domain maps to 142-372 (TTPTYTAYVR…MILQQSISKD (231 aa)). Positions 375-441 (KEKIGKIYEV…EYDLIGVVYN (67 aa)) constitute a TRAM domain.

This sequence belongs to the methylthiotransferase family. RimO subfamily. It depends on [4Fe-4S] cluster as a cofactor.

Its subcellular location is the cytoplasm. The catalysed reaction is L-aspartate(89)-[ribosomal protein uS12]-hydrogen + (sulfur carrier)-SH + AH2 + 2 S-adenosyl-L-methionine = 3-methylsulfanyl-L-aspartate(89)-[ribosomal protein uS12]-hydrogen + (sulfur carrier)-H + 5'-deoxyadenosine + L-methionine + A + S-adenosyl-L-homocysteine + 2 H(+). Functionally, catalyzes the methylthiolation of an aspartic acid residue of ribosomal protein uS12. The protein is Ribosomal protein uS12 methylthiotransferase RimO of Clostridium botulinum (strain Okra / Type B1).